The following is a 394-amino-acid chain: Actin-related protein 2 (394 aa).

N-acetylmethionine is present on Met-1. Residues 160 to 162 (GDG) and 214 to 218 (RMIKE) each bind ATP. The residue at position 299 (Lys-299) is an N6-acetyllysine. An ATP-binding site is contributed by 305–310 (GGSTMY). An N6-acetyllysine modification is found at Lys-322.

It belongs to the actin family. ARP2 subfamily. In terms of assembly, component of the Arp2/3 complex composed of ACTR2/ARP2, ACTR3/ARP3, ARPC1B/p41-ARC, ARPC2/p34-ARC, ARPC3/p21-ARC, ARPC4/p20-ARC and ARPC5/p16-ARC.

It localises to the cytoplasm. Its subcellular location is the cytoskeleton. It is found in the cell projection. The protein localises to the nucleus. ATP-binding component of the Arp2/3 complex, a multiprotein complex that mediates actin polymerization upon stimulation by nucleation-promoting factor (NPF). The Arp2/3 complex mediates the formation of branched actin networks in the cytoplasm, providing the force for cell motility. Seems to contact the pointed end of the daughter actin filament. In addition to its role in the cytoplasmic cytoskeleton, the Arp2/3 complex also promotes actin polymerization in the nucleus, thereby regulating gene transcription and repair of damaged DNA. The Arp2/3 complex promotes homologous recombination (HR) repair in response to DNA damage by promoting nuclear actin polymerization, leading to drive motility of double-strand breaks (DSBs). The sequence is that of Actin-related protein 2 (Actr2) from Rattus norvegicus (Rat).